Here is a 644-residue protein sequence, read N- to C-terminus: Exoribonuclease 2 (644 aa).

Positions 189-516 (REDLTALNFV…NHRLLKAIIT (328 aa)) constitute an RNB domain. An S1 motif domain is found at 561–643 (DTRFTAEIID…ETRNVIARPV (83 aa)).

This sequence belongs to the RNR ribonuclease family. RNase II subfamily.

The protein localises to the cytoplasm. The enzyme catalyses Exonucleolytic cleavage in the 3'- to 5'-direction to yield nucleoside 5'-phosphates.. Involved in mRNA degradation. Hydrolyzes single-stranded polyribonucleotides processively in the 3' to 5' direction. This chain is Exoribonuclease 2, found in Yersinia pseudotuberculosis serotype O:3 (strain YPIII).